The sequence spans 157 residues: Mannose-specific lectin (157 aa).

A signal peptide (or 23; in 70% of the molecules) is located at residues 1–19 (MAKASLLILAAIFLGVITP). One can recognise a Bulb-type lectin domain in the interval 24–132 (DNILYSGETL…DRWATGTHTG (109 aa)). The alpha-D-mannopyranose site is built by Gln49, Asp51, Asn53, Tyr57, Asp60, Lys61, Trp64, Ala65, Asn67, Gln80, Asp82, Asn84, Tyr88, Ile95, Trp96, Asn99, Asn106, Gln112, Asp114, Asn116, Tyr120, and Trp125. An intrachain disulfide couples Cys52 to Cys75. The propeptide at 129–157 (THTGLVGIPASPPSEKYPTAGKIKLVTAK) is removed in mature form.

As to quaternary structure, homotetramer.

It localises to the secreted. Mannose-specific lectin which binds alpha-D-linked mannose. Displays a high affinity for alpha-(1-3)-mannose oligomers. Displays antiviral activity and therefore may contribute to defense against infections. In Galanthus nivalis (Common snowdrop), this protein is Mannose-specific lectin.